A 295-amino-acid chain; its full sequence is CBY1-interacting BAR domain-containing protein 1 (295 aa).

A mitochondrion-targeting transit peptide spans 1–49 (MMSRTPDARARDTQTKQIQENITSVEKHFGDLCQLFAAYVRKTARLRDK). A BAR-like region spans residues 12–222 (DTQTKQIQEN…NVDEEGDLEV (211 aa)). A coiled-coil region spans residues 111 to 185 (KREDLKQTQS…KQKIRDIKKV (75 aa)). Residues 243 to 265 (SKLSLNRTGTSMSKSGTMQSRTS) are compositionally biased toward polar residues. The segment at 243-295 (SKLSLNRTGTSMSKSGTMQSRTSSRQRKRDDEEDEEEDDEDEDDLEEVTDDEH) is disordered. The span at 273 to 295 (DEEDEEEDDEDEDDLEEVTDDEH) shows a compositional bias: acidic residues.

Belongs to the CIBAR family.

It localises to the cytoplasm. It is found in the cytoskeleton. The protein localises to the microtubule organizing center. Its subcellular location is the centrosome. The protein resides in the centriole. It localises to the cell projection. It is found in the cilium. The protein localises to the nucleus. Its subcellular location is the mitochondrion inner membrane. The protein resides in the flagellum. Plays a critical role in regulating mitochondrial ultrastructure and function by maintaining the integrity of mitochondrial morphology, particularly the organization of cristae. Plays a crucial role in ciliogenesis. Plays a key role in the correct positioning of the annulus, a septin-based ring structure in the sperm flagellum, serving both as a physical barrier and a membrane diffusion barrier that separates the midpiece (MP) from the principal piece (PP). This chain is CBY1-interacting BAR domain-containing protein 1 (cibar1), found in Danio rerio (Zebrafish).